A 130-amino-acid chain; its full sequence is Small ribosomal subunit protein eS6 (130 aa).

Belongs to the eukaryotic ribosomal protein eS6 family.

This chain is Small ribosomal subunit protein eS6, found in Methanosphaera stadtmanae (strain ATCC 43021 / DSM 3091 / JCM 11832 / MCB-3).